The sequence spans 640 residues: METPATEKPAGEKSGTEKIGVKRLGALSLAAIGVVYGDIGTSPLYTLKECFDPDHGIPSSPENVIGIASLVFWAIILVVTIKYVLFVMRADNRGEGGILALLALAIRATGGDRGLVGPLVGLGLFGAALFIGDGMITPAISVLSAIEGLEVGTPFFAPYVVPLTLIVLVALFTIQSHGTELVGRLFGPVMVVWFLTIAALGLTEVVGHPHILMAVNPAYGLTFLFTHGWIAFVVMGSVVLAVTGGEALYADMGHFGKLPIQMAWFALVLPALTLNYFGQAALILDNPEAARNPFYMLVPGWGLYPMVILATLATVIASQAVISGVFSLSRQAVQLGYSPRLDIRHTSDEEEGQIYIPRANWGLLLGIVALVVGFKSSSNLAAAYGIAVTGTMAATTILALVVAHRSWNWPLWLCLGLGAVFLAVDLGFLGANLLKVTQGGWFPLAVGLGMLLLMATWRKGRDILSRRLADGALPLDMFMQQQKDSTSILRVRGTAVFMTGGTDTVPIALLHNLKHNKVLHQRVVFLTVITEDIPRVSARDRVVVEGLAEGFYRITVRYGFFQEPDIPKVLRLCKAFGLEFEMMDTSFFLGRETLVPSTHPEMPEWRERLFVIMSRNAVSATDFFRIPAGRVVELGIQVQL.

The next 12 membrane-spanning stretches (helical) occupy residues 24–44, 67–87, 116–136, 154–174, 186–206, 222–242, 264–284, 296–316, 354–374, 382–402, 411–431, and 436–456; these read LGALSLAAIGVVYGDIGTSPL, IASLVFWAIILVVTIKYVLFV, VGPLVGLGLFGAALFIGDGMI, PFFAPYVVPLTLIVLVALFTI, FGPVMVVWFLTIAALGLTEVV, TFLFTHGWIAFVVMGSVVLAV, WFALVLPALTLNYFGQAALIL, MLVPGWGLYPMVILATLATVI, IYIPRANWGLLLGIVALVVGF, AAYGIAVTGTMAATTILALVV, LWLCLGLGAVFLAVDLGFLGA, and VTQGGWFPLAVGLGMLLLMAT.

Belongs to the HAK/KUP transporter (TC 2.A.72) family.

It localises to the cell inner membrane. The catalysed reaction is K(+)(in) + H(+)(in) = K(+)(out) + H(+)(out). Transport of potassium into the cell. Likely operates as a K(+):H(+) symporter. This is Probable potassium transport system protein Kup 1 from Paramagnetospirillum magneticum (strain ATCC 700264 / AMB-1) (Magnetospirillum magneticum).